The primary structure comprises 157 residues: Epithelial membrane protein 1 (157 aa).

A helical membrane pass occupies residues 1 to 21 (MLVLLAGIFVVHIATVIMLFV). Residues asparagine 43 and asparagine 46 are each glycosylated (N-linked (GlcNAc...) asparagine). Helical transmembrane passes span 67–87 (FMIL…FQLF), 95–115 (FFLS…GVSI), and 134–154 (YILG…YLVL).

Belongs to the PMP-22/EMP/MP20 family.

Its subcellular location is the membrane. This Homo sapiens (Human) protein is Epithelial membrane protein 1 (EMP1).